Here is a 99-residue protein sequence, read N- to C-terminus: Large ribosomal subunit protein uL23 (99 aa).

Contacts protein L29, and trigger factor when it is bound to the ribosome. Part of the 50S ribosomal subunit.

One of the early assembly proteins it binds 23S rRNA. One of the proteins that surrounds the polypeptide exit tunnel on the outside of the ribosome. Forms the main docking site for trigger factor binding to the ribosome. The sequence is that of Large ribosomal subunit protein uL23 from Rhodopseudomonas palustris (strain ATCC BAA-98 / CGA009).